The primary structure comprises 622 residues: Chaperone protein HscA homolog (622 aa).

This sequence belongs to the heat shock protein 70 family.

Functionally, chaperone involved in the maturation of iron-sulfur cluster-containing proteins. Has a low intrinsic ATPase activity which is markedly stimulated by HscB. The polypeptide is Chaperone protein HscA homolog (Burkholderia cenocepacia (strain HI2424)).